A 165-amino-acid chain; its full sequence is Phosphopantetheine adenylyltransferase (165 aa).

Thr-9 is a binding site for substrate. ATP-binding positions include Thr-9 to Phe-10 and His-17. Lys-41, Leu-78, and Arg-92 together coordinate substrate. Residues Gly-93 to Arg-95, Glu-103, and His-128 to Lys-134 contribute to the ATP site.

It belongs to the bacterial CoaD family. As to quaternary structure, homohexamer. It depends on Mg(2+) as a cofactor.

The protein localises to the cytoplasm. It catalyses the reaction (R)-4'-phosphopantetheine + ATP + H(+) = 3'-dephospho-CoA + diphosphate. The protein operates within cofactor biosynthesis; coenzyme A biosynthesis; CoA from (R)-pantothenate: step 4/5. Reversibly transfers an adenylyl group from ATP to 4'-phosphopantetheine, yielding dephospho-CoA (dPCoA) and pyrophosphate. The sequence is that of Phosphopantetheine adenylyltransferase from Ruegeria sp. (strain TM1040) (Silicibacter sp.).